The primary structure comprises 122 residues: Lectin A (122 aa).

Ca(2+) is bound at residue Y38. An alpha-D-galactoside-binding residues include E44, Q57, and D96. D96, T100, D103, and N104 together coordinate Ca(2+). Residue D103 participates in an alpha-D-galactoside binding.

The protein belongs to the LecA/PllA lectin family. In terms of assembly, homotetramer.

Its function is as follows. Lectin that specifically binds alpha-galactoside-terminating glycoconjugates. Shows high apparent binding to the alpha-Gal epitope (Gal-alpha-1,3-Gal-beta-1,4-GlcNAc terminating glycans) as well as to Gal-alpha-1,4-GlcNAc and Gal-alpha-1,3-GalNAc. Gal-alpha-1,3-GalNAc may be one natural ligand bound by PllA both in the nematode symbiont and in infected insects. The sequence is that of Lectin A from Photorhabdus laumondii subsp. laumondii (strain DSM 15139 / CIP 105565 / TT01) (Photorhabdus luminescens subsp. laumondii).